The sequence spans 401 residues: Ufm1-specific protease 2 (401 aa).

Residues cysteine 234, aspartate 358, and histidine 360 contribute to the active site.

The protein belongs to the peptidase C78 family.

Its subcellular location is the endoplasmic reticulum. The protein resides in the cytoplasm. It is found in the nucleus. Thiol-dependent isopeptidase that specifically cleaves UFM1, a ubiquitin-like modifier protein, from conjugated proteins. While it is also able to mediate the processing of UFM1 precursors, a prerequisite for conjugation reactions, ufsp2 mainly acts as a protein deUFMylase that mediates deconjugation of UFM1 from target proteins. The protein is Ufm1-specific protease 2 of Danio rerio (Zebrafish).